The following is a 579-amino-acid chain: Transcription factor COE2 (579 aa).

An interaction with DNA region spans residues 63–66; it reads RKSN. The C5-type zinc finger occupies 149–168; the sequence is CRVLLTHEVMCSRCCEKKSC. 2 interaction with DNA regions span residues 195–202 and 234–237; these read NCLKTAGN and NNSK. One can recognise an IPT/TIG domain in the interval 260–343; the sequence is PCIKAISPSE…KGAPGRFIYT (84 aa). 3 disordered regions span residues 442–482, 514–533, and 549–579; these read GVSI…YGSN, AIMP…LPFS, and LRPQ…VPPM. The span at 449–459 shows a compositional bias: polar residues; the sequence is GQTSGQGYTRN. Low complexity-rich tracts occupy residues 460–472 and 521–533; these read SSSL…PSSS and PGSS…LPFS.

Belongs to the COE family.

The protein resides in the nucleus. The chain is Transcription factor COE2 (coe2) from Danio rerio (Zebrafish).